The chain runs to 141 residues: NADPH-dependent 7-cyano-7-deazaguanine reductase (141 aa).

Residue Cys-56 is the Thioimide intermediate of the active site. Asp-63 functions as the Proton donor in the catalytic mechanism. Residues 78-80 and 97-98 contribute to the substrate site; these read VEL and HE.

The protein belongs to the GTP cyclohydrolase I family. QueF type 1 subfamily.

It is found in the cytoplasm. It catalyses the reaction 7-aminomethyl-7-carbaguanine + 2 NADP(+) = 7-cyano-7-deazaguanine + 2 NADPH + 3 H(+). The protein operates within tRNA modification; tRNA-queuosine biosynthesis. Catalyzes the NADPH-dependent reduction of 7-cyano-7-deazaguanine (preQ0) to 7-aminomethyl-7-deazaguanine (preQ1). In Trichodesmium erythraeum (strain IMS101), this protein is NADPH-dependent 7-cyano-7-deazaguanine reductase.